We begin with the raw amino-acid sequence, 269 residues long: Hydroxyethylthiazole kinase (269 aa).

Met45 contributes to the substrate binding site. The ATP site is built by Arg121 and Thr167. A substrate-binding site is contributed by Gly194.

The protein belongs to the Thz kinase family. The cofactor is Mg(2+).

It carries out the reaction 5-(2-hydroxyethyl)-4-methylthiazole + ATP = 4-methyl-5-(2-phosphooxyethyl)-thiazole + ADP + H(+). Its pathway is cofactor biosynthesis; thiamine diphosphate biosynthesis; 4-methyl-5-(2-phosphoethyl)-thiazole from 5-(2-hydroxyethyl)-4-methylthiazole: step 1/1. Functionally, catalyzes the phosphorylation of the hydroxyl group of 4-methyl-5-beta-hydroxyethylthiazole (THZ). In Geobacillus sp. (strain WCH70), this protein is Hydroxyethylthiazole kinase.